Reading from the N-terminus, the 428-residue chain is Dihydroorotase (428 aa).

The Zn(2+) site is built by His-59 and His-61. Residues 61-63 (HLR) and Asn-93 each bind substrate. Residues Asp-151, His-178, and His-231 each coordinate Zn(2+). Asn-277 provides a ligand contact to substrate. Asp-304 contacts Zn(2+). Residue Asp-304 is part of the active site. Residues His-308 and 322–323 (FG) contribute to the substrate site.

It belongs to the metallo-dependent hydrolases superfamily. DHOase family. Class I DHOase subfamily. Zn(2+) serves as cofactor.

It catalyses the reaction (S)-dihydroorotate + H2O = N-carbamoyl-L-aspartate + H(+). It participates in pyrimidine metabolism; UMP biosynthesis via de novo pathway; (S)-dihydroorotate from bicarbonate: step 3/3. Functionally, catalyzes the reversible cyclization of carbamoyl aspartate to dihydroorotate. The polypeptide is Dihydroorotase (Bacillus cereus (strain ATCC 10987 / NRS 248)).